Consider the following 881-residue polypeptide: Rho GTPase-activating protein 17 (881 aa).

The BAR domain occupies 14–246 (QTVGRAEKTE…MRAHQDKWAE (233 aa)). The 191-residue stretch at 252-442 (TPLEEHLKRS…PIIQHADWFF (191 aa)) folds into the Rho-GAP domain. A compositionally biased stretch (polar residues) spans 459–475 (TPSSNHSFHTGNDSDSG). The disordered stretch occupies residues 459 to 482 (TPSSNHSFHTGNDSDSGTLERKRP). Residues Ser-484 and Ser-575 each carry the phosphoserine modification. The disordered stretch occupies residues 511–881 (GGTLNRKHIS…IDNDTESTAL (371 aa)). Residues 592 to 617 (RNNSQIASGQNQPQAAAGSHQLSMGQ) show a composition bias toward polar residues. Over residues 637-650 (APAPPKPGNPPPGH) the composition is skewed to pro residues. A compositionally biased stretch (low complexity) spans 653 to 664 (GQSSSGTSQHPP). The span at 665–678 (SLSPKPPTRSPSPP) shows a compositional bias: pro residues. Phosphothreonine occurs at positions 679 and 682. Low complexity predominate over residues 679-698 (TQHTGQPPGQPSAPSQLSAP). Phosphoserine is present on residues Ser-702 and Ser-704. Composition is skewed to pro residues over residues 712 to 721 (NHPPPQPPTQ), 752 to 764 (HTPPQTPTPPSTP), and 806 to 816 (RPSVPPPPQPP). Phosphothreonine is present on residues Thr-753, Thr-757, and Thr-759. The SH3-binding signature appears at 753 to 766 (TPPQTPTPPSTPPL). At Ser-762 the chain carries Phosphoserine. Thr-763 carries the post-translational modification Phosphothreonine. The span at 822 to 844 (GDSSLTNTAPTASKIVTDSNSRV) shows a compositional bias: polar residues. Residues 845–865 (SEPHRSIFPEMHSDSASKDVP) are compositionally biased toward basic and acidic residues. Residues 872–881 (IDNDTESTAL) are compositionally biased toward acidic residues.

Component of a complex whose core is composed of ARHGAP17, AMOT, PALS1, PATJ and PARD3/PAR3. Interacts with NHERF1, FNBP1, TRIP10, CAPZA (CAPZA1, CAPZA2 or CAPZA3), CAPZB, CD2AP and SH3KBP1/CIN85. Ubiquitously expressed. Expressed at higher level in heart and placenta.

Its subcellular location is the membrane. It localises to the cytoplasm. The protein resides in the cell junction. The protein localises to the tight junction. In terms of biological role, rho GTPase-activating protein involved in the maintenance of tight junction by regulating the activity of CDC42, thereby playing a central role in apical polarity of epithelial cells. Specifically acts as a GTPase activator for the CDC42 GTPase by converting it to an inactive GDP-bound state. The complex formed with AMOT acts by regulating the uptake of polarity proteins at tight junctions, possibly by deciding whether tight junction transmembrane proteins are recycled back to the plasma membrane or sent elsewhere. Participates in the Ca(2+)-dependent regulation of exocytosis, possibly by catalyzing GTPase activity of Rho family proteins and by inducing the reorganization of the cortical actin filaments. Acts as a GTPase activator in vitro for RAC1. The protein is Rho GTPase-activating protein 17 (ARHGAP17) of Homo sapiens (Human).